Here is a 404-residue protein sequence, read N- to C-terminus: Cysteine desulfurase IscS (404 aa).

Residues 75 to 76 (AT), Asn155, Gln183, and 203 to 205 (SSH) each bind pyridoxal 5'-phosphate. N6-(pyridoxal phosphate)lysine is present on Lys206. Thr243 lines the pyridoxal 5'-phosphate pocket. Catalysis depends on Cys328, which acts as the Cysteine persulfide intermediate. Cys328 serves as a coordination point for [2Fe-2S] cluster.

This sequence belongs to the class-V pyridoxal-phosphate-dependent aminotransferase family. NifS/IscS subfamily. Homodimer. Forms a heterotetramer with IscU, interacts with other sulfur acceptors. Requires pyridoxal 5'-phosphate as cofactor.

The protein localises to the cytoplasm. It catalyses the reaction (sulfur carrier)-H + L-cysteine = (sulfur carrier)-SH + L-alanine. The protein operates within cofactor biosynthesis; iron-sulfur cluster biosynthesis. Its function is as follows. Master enzyme that delivers sulfur to a number of partners involved in Fe-S cluster assembly, tRNA modification or cofactor biosynthesis. Catalyzes the removal of elemental sulfur atoms from cysteine to produce alanine. Functions as a sulfur delivery protein for Fe-S cluster synthesis onto IscU, an Fe-S scaffold assembly protein, as well as other S acceptor proteins. The sequence is that of Cysteine desulfurase IscS from Histophilus somni (strain 129Pt) (Haemophilus somnus).